Here is a 379-residue protein sequence, read N- to C-terminus: Glutamate 5-kinase (379 aa).

K14 lines the ATP pocket. Substrate is bound by residues S54, D141, and N153. ATP-binding positions include 173–174 (TD) and 215–221 (TGGMATK). The region spanning 280-358 (KGRLLLDIGA…DEIEPLLGYD (79 aa)) is the PUA domain.

Belongs to the glutamate 5-kinase family.

It localises to the cytoplasm. The catalysed reaction is L-glutamate + ATP = L-glutamyl 5-phosphate + ADP. The protein operates within amino-acid biosynthesis; L-proline biosynthesis; L-glutamate 5-semialdehyde from L-glutamate: step 1/2. In terms of biological role, catalyzes the transfer of a phosphate group to glutamate to form L-glutamate 5-phosphate. In Shewanella amazonensis (strain ATCC BAA-1098 / SB2B), this protein is Glutamate 5-kinase.